We begin with the raw amino-acid sequence, 346 residues long: Probable choline kinase 1 (346 aa).

Arg-73, Gln-210, and Asp-227 together coordinate ATP.

It belongs to the choline/ethanolamine kinase family. In terms of tissue distribution, expressed in roots. Expressed at low levels in cauline leaves and flowers.

The catalysed reaction is choline + ATP = phosphocholine + ADP + H(+). The protein operates within phospholipid metabolism; phosphatidylcholine biosynthesis; phosphocholine from choline: step 1/1. In terms of biological role, involved in phospholipid biosynthesis. Catalyzes the first step in phosphatidylcholine biosynthesis. This is Probable choline kinase 1 (CK1) from Arabidopsis thaliana (Mouse-ear cress).